The primary structure comprises 208 residues: Pectinesterase inhibitor 6 (208 aa).

A signal peptide spans 1–30; the sequence is MTSSSSSPITFTLLLLLSLLVALNPNPSLA. Cys53 and Cys62 form a disulfide bridge. N-linked (GlcNAc...) asparagine glycosylation is found at Asn54 and Asn75. Cys118 and Cys165 form a disulfide bridge.

This sequence belongs to the PMEI family.

The protein localises to the secreted. It is found in the extracellular space. Its subcellular location is the apoplast. Its function is as follows. Pectin methylesterase (PME) inhibitor that targets PME from seeds and modulates PME activity and pectin methylesterification during seed germination. Promotes mucilage release by limiting methylesterification of homogalacturonan in seed coat epidermal cells. The chain is Pectinesterase inhibitor 6 from Arabidopsis thaliana (Mouse-ear cress).